The following is a 184-amino-acid chain: Inactive cytochrome P450 monooxygenase lolP2 (184 aa).

The chain crosses the membrane as a helical span at residues 10–30 (GIVWLTVAAIAISYILQSSFL). The interval 161 to 184 (RRTRGSRPRSRPRWMPARWSRSSP) is disordered. Positions 163–172 (TRGSRPRSRP) are enriched in basic residues. The segment covering 173–184 (RWMPARWSRSSP) has biased composition (low complexity).

This sequence belongs to the cytochrome P450 family.

It is found in the membrane. Its function is as follows. Cytochrome P450 monooxygenase; part of the gene cluster that mediates the biosynthesis of loline alkaloids, potent insecticidal agents composed of a pyrrolizidine ring system and an uncommon ether bridge linking carbons 2 and 7. Lolines are structurally differentiated by the various modifications of the L-amino group and include norloline, loline, N-methylloline, N-acetylloline, N-acetylnorloline, and N-formylloline. The first committed step is the condensation of O-acetyl-L-homoserine (derived from L-aspartic acid) and L-proline, probably catalyzed by the gamma-type pyridoxal 5'-phosphate(PLP)-dependent enzyme lolC, to give the diamino diacid, NACPP. Ensuing cyclization, decarboxylation, and acetylation steps yield 1-exo-acetamidopyrrolizidine (AcAP). LolO is required for installation of the ether bridge upon the pathway intermediate, 1-exo-acetamidopyrrolizidine (AcAP). In sequential 2-oxoglutarate- and O(2)-consuming steps, lolO removes hydrogens from C2 and C7 of AcAP to form both carbon-oxygen bonds in N-acetylnorloline (NANL), the precursor to all other lolines. The enzymes lolD, lolE, lolF and lolT have also been proposed to be involved in the ether-bridge installation. Further processing of the exocyclic moiety of NANL by fungal N-acetamidase (LolN), methyltransferase (LolM), and cytochrome P450 (LolP) enzymes, with occasional involvement of a plant acetyltransferase, generates the other known lolines. LolN transforms NANL to norlonine which is monomethylated and dimethylated to respectively lonine and N-methyllonine (NML) by lolM. LolP catalyzes hydroxylation of the methyl group in N-methylloline (NML) and further oxygenation to N-formylloline (NFL). A plant acetyltransferase is responsible for the acetylation of loline to form N-acetylloline (NAL). LolA might interact with aspartate kinase to prevent feedback inhibition of its activity by these end products and thereby promote production of L-homoserine from L-aspartate. This is Inactive cytochrome P450 monooxygenase lolP2 from Epichloe uncinata (Endophyte fungus).